Consider the following 386-residue polypeptide: Zinc finger protein 385A (386 aa).

The Matrin-type 1 zinc-finger motif lies at 74–98 (ISCNICQIRFNSQSQAEAHYKGNRH). The disordered stretch occupies residues 90–193 (EAHYKGNRHA…ASLPGGSKEE (104 aa)). Residues 103–121 (KGIEAAKTRGREPGVREPG) are compositionally biased toward basic and acidic residues. Positions 145 to 351 (NGLGPAPGSP…AGSPLSLRPA (207 aa)) are necessary for binding to ITPR1, CEBPA and p53/TP53 mRNAs. Serine 185 is modified (phosphoserine). The Matrin-type 2 zinc-finger motif lies at 201–225 (LYCALCKVAVNSLSQLEAHNKGTKH). Threonine 248 is modified (phosphothreonine). The segment at 261–285 (FHCEICNVKVNSEVQLKQHISSRRH) adopts a Matrin-type 3 zinc-finger fold. The segment at 279–309 (HISSRRHRDGVAGKPNPLLSRHKKSRGAGEL) is disordered.

As to quaternary structure, interacts with ELAVL1; the interaction is indirect, mRNA-dependent and may regulate p53/TP53 expression. Interacts with p53/TP53; the interaction is direct and enhances p53/TP53 transactivation functions on cell-cycle arrest target genes, resulting in growth arrest. Ubiquitinated upon prolonged exposure to genotoxic stress, which leads to proteasomal degradation of ZNF385A and releases p53/TP53 from cell-cycle arrest target gene promoters. As to expression, expressed predominantly in the retina.

It localises to the cytoplasm. The protein localises to the nucleus. It is found in the nucleolus. The protein resides in the cell projection. Its subcellular location is the dendrite. Functionally, RNA-binding protein that affects the localization and the translation of a subset of mRNA. May play a role in adipogenesis through binding to the 3'-UTR of CEBPA mRNA and regulation of its translation. Targets ITPR1 mRNA to dendrites in Purkinje cells, and may regulate its activity-dependent translation. With ELAVL1, binds the 3'-UTR of p53/TP53 mRNAs to control their nuclear export induced by CDKN2A. Hence, may regulate p53/TP53 expression and mediate in part the CDKN2A anti-proliferative activity. May also bind CCNB1 mRNA. Alternatively, may also regulate p53/TP53 activity through direct protein-protein interaction. Interacts with p53/TP53 and promotes cell-cycle arrest over apoptosis enhancing preferentially the DNA binding and transactivation of p53/TP53 on cell-cycle arrest target genes over proapoptotic target genes. May also regulate the ubiquitination and stability of CDKN1A promoting DNA damage-induced cell cycle arrest. Also plays a role in megakaryocytes differentiation. The polypeptide is Zinc finger protein 385A (ZNF385A) (Homo sapiens (Human)).